Consider the following 418-residue polypeptide: Mitochondrial distribution and morphology protein 10 (418 aa).

This sequence belongs to the MDM10 family. As to quaternary structure, component of the ER-mitochondria encounter structure (ERMES) or MDM complex, composed of MMM1, MDM10, MDM12 and MDM34. Associates with the mitochondrial outer membrane sorting assembly machinery SAM(core) complex.

The protein resides in the mitochondrion outer membrane. In terms of biological role, component of the ERMES/MDM complex, which serves as a molecular tether to connect the endoplasmic reticulum and mitochondria. Components of this complex are involved in the control of mitochondrial shape and protein biogenesis and may function in phospholipid exchange. MDM10 is involved in the late assembly steps of the general translocase of the mitochondrial outer membrane (TOM complex). Functions in the TOM40-specific route of the assembly of outer membrane beta-barrel proteins, including the association of TOM40 with the receptor TOM22 and small TOM proteins. Can associate with the SAM(core) complex as well as the MDM12-MMM1 complex, both involved in late steps of the major beta-barrel assembly pathway, that is responsible for biogenesis of all outer membrane beta-barrel proteins. May act as a switch that shuttles between both complexes and channels precursor proteins into the TOM40-specific pathway. Plays a role in mitochondrial morphology and in the inheritance of mitochondria. The protein is Mitochondrial distribution and morphology protein 10 of Meyerozyma guilliermondii (strain ATCC 6260 / CBS 566 / DSM 6381 / JCM 1539 / NBRC 10279 / NRRL Y-324) (Yeast).